We begin with the raw amino-acid sequence, 395 residues long: Phosphoglycerate kinase (395 aa).

Residues 20–22, Arg-35, 58–61, Arg-117, and Arg-150 contribute to the substrate site; these read DLN and HFGR. Residues Lys-200, Glu-322, and 352 to 355 contribute to the ATP site; that span reads GGDT.

This sequence belongs to the phosphoglycerate kinase family. Monomer.

It is found in the cytoplasm. It catalyses the reaction (2R)-3-phosphoglycerate + ATP = (2R)-3-phospho-glyceroyl phosphate + ADP. It participates in carbohydrate degradation; glycolysis; pyruvate from D-glyceraldehyde 3-phosphate: step 2/5. This Brucella suis biovar 1 (strain 1330) protein is Phosphoglycerate kinase.